We begin with the raw amino-acid sequence, 277 residues long: Large ribosomal subunit protein uL2 (277 aa).

Positions 219–277 (TVRGSVMNPNDHPHGGGEGKAPVGRKAPSTPWGKPALGLKTRNKKAKSDKLIVRRRNEK) are disordered. Basic and acidic residues predominate over residues 264-277 (AKSDKLIVRRRNEK).

This sequence belongs to the universal ribosomal protein uL2 family. In terms of assembly, part of the 50S ribosomal subunit. Forms a bridge to the 30S subunit in the 70S ribosome.

One of the primary rRNA binding proteins. Required for association of the 30S and 50S subunits to form the 70S ribosome, for tRNA binding and peptide bond formation. It has been suggested to have peptidyltransferase activity; this is somewhat controversial. Makes several contacts with the 16S rRNA in the 70S ribosome. In Streptococcus gordonii (strain Challis / ATCC 35105 / BCRC 15272 / CH1 / DL1 / V288), this protein is Large ribosomal subunit protein uL2.